The chain runs to 61 residues: Large ribosomal subunit protein uL30 (61 aa).

Belongs to the universal ribosomal protein uL30 family. As to quaternary structure, part of the 50S ribosomal subunit.

The chain is Large ribosomal subunit protein uL30 from Clostridioides difficile (strain 630) (Peptoclostridium difficile).